The following is a 542-amino-acid chain: Adenosylmethionine-8-amino-7-oxononanoate aminotransferase (542 aa).

170–171 (GS) provides a ligand contact to pyridoxal 5'-phosphate. A substrate-binding site is contributed by Tyr205. Asp311 is a pyridoxal 5'-phosphate binding site. Residues Lys340, Gly375, and Arg470 each contribute to the substrate site. Lys340 is subject to N6-(pyridoxal phosphate)lysine. A disordered region spans residues 509–542 (DGGLWTKRPDGPDNPDKANTPDTPDGARTGETVV). Over residues 515–524 (KRPDGPDNPD) the composition is skewed to basic and acidic residues.

The protein belongs to the class-III pyridoxal-phosphate-dependent aminotransferase family. BioA subfamily. Homodimer. Pyridoxal 5'-phosphate is required as a cofactor.

The protein localises to the cytoplasm. It catalyses the reaction (8S)-8-amino-7-oxononanoate + S-adenosyl-L-methionine = S-adenosyl-4-methylsulfanyl-2-oxobutanoate + (7R,8S)-7,8-diammoniononanoate. It participates in cofactor biosynthesis; biotin biosynthesis; 7,8-diaminononanoate from 8-amino-7-oxononanoate (SAM route): step 1/1. In terms of biological role, catalyzes the transfer of the alpha-amino group from S-adenosyl-L-methionine (SAM) to 7-keto-8-aminopelargonic acid (KAPA) to form 7,8-diaminopelargonic acid (DAPA). It is the only aminotransferase known to utilize SAM as an amino donor. The polypeptide is Adenosylmethionine-8-amino-7-oxononanoate aminotransferase (Nitratidesulfovibrio vulgaris (strain ATCC 29579 / DSM 644 / CCUG 34227 / NCIMB 8303 / VKM B-1760 / Hildenborough) (Desulfovibrio vulgaris)).